The sequence spans 281 residues: Aldo-keto reductase MMAR_1744 (281 aa).

Y56 (proton donor) is an active-site residue. Residues L196, I234, S237, T245, N246, and R272 each contribute to the NADPH site.

This sequence belongs to the aldo/keto reductase family.

The polypeptide is Aldo-keto reductase MMAR_1744 (Mycobacterium marinum (strain ATCC BAA-535 / M)).